A 534-amino-acid polypeptide reads, in one-letter code: Peptide chain release factor 3 (534 aa).

Residues 9-278 (SRRRTFAIIS…FFVEHAPPPQ (270 aa)) enclose the tr-type G domain. Residues 18 to 25 (SHPDAGKT), 86 to 90 (DTPGH), and 140 to 143 (NKLD) each bind GTP.

It belongs to the TRAFAC class translation factor GTPase superfamily. Classic translation factor GTPase family. PrfC subfamily.

The protein resides in the cytoplasm. Its function is as follows. Increases the formation of ribosomal termination complexes and stimulates activities of RF-1 and RF-2. It binds guanine nucleotides and has strong preference for UGA stop codons. It may interact directly with the ribosome. The stimulation of RF-1 and RF-2 is significantly reduced by GTP and GDP, but not by GMP. In Stenotrophomonas maltophilia (strain R551-3), this protein is Peptide chain release factor 3.